The chain runs to 250 residues: Small ribosomal subunit protein uS3 (250 aa).

In terms of domain architecture, KH type-2 spans 16–85; sequence IDEYLEKELE…NPQIEVKEVS (70 aa).

Belongs to the universal ribosomal protein uS3 family. Part of the 30S ribosomal subunit.

Its function is as follows. Binds the lower part of the 30S subunit head. The chain is Small ribosomal subunit protein uS3 from Methanobrevibacter smithii (strain ATCC 35061 / DSM 861 / OCM 144 / PS).